The sequence spans 255 residues: Small ribosomal subunit protein uS2 (255 aa).

The tract at residues 232–255 is disordered; the sequence is ASGRDLGASEEVPVEPALEEASEA.

Belongs to the universal ribosomal protein uS2 family.

The polypeptide is Small ribosomal subunit protein uS2 (Sinorhizobium medicae (strain WSM419) (Ensifer medicae)).